The following is a 319-amino-acid chain: Sulfate adenylyltransferase subunit 2 (319 aa).

Belongs to the PAPS reductase family. CysD subfamily. As to quaternary structure, heterodimer composed of CysD, the smaller subunit, and CysN.

It catalyses the reaction sulfate + ATP + H(+) = adenosine 5'-phosphosulfate + diphosphate. The protein operates within sulfur metabolism; hydrogen sulfide biosynthesis; sulfite from sulfate: step 1/3. With CysN forms the ATP sulfurylase (ATPS) that catalyzes the adenylation of sulfate producing adenosine 5'-phosphosulfate (APS) and diphosphate, the first enzymatic step in sulfur assimilation pathway. APS synthesis involves the formation of a high-energy phosphoric-sulfuric acid anhydride bond driven by GTP hydrolysis by CysN coupled to ATP hydrolysis by CysD. In Methylobacterium radiotolerans (strain ATCC 27329 / DSM 1819 / JCM 2831 / NBRC 15690 / NCIMB 10815 / 0-1), this protein is Sulfate adenylyltransferase subunit 2.